The chain runs to 159 residues: Protein Smg homolog (159 aa).

Belongs to the Smg family.

The sequence is that of Protein Smg homolog from Shewanella amazonensis (strain ATCC BAA-1098 / SB2B).